A 163-amino-acid chain; its full sequence is Photosystem II extrinsic protein V (163 aa).

Positions 1-26 (MFKKSYQFFALVLFSIFNVLVTSASA) are cleaved as a signal peptide. Cys-63, Cys-66, His-67, and His-118 together coordinate heme c.

The protein belongs to the cytochrome c family. PsbV subfamily. As to quaternary structure, PSII is composed of 1 copy each of membrane proteins PsbA, PsbB, PsbC, PsbD, PsbE, PsbF, PsbH, PsbI, PsbJ, PsbK, PsbL, PsbM, PsbT, PsbY, PsbZ, Psb30/Ycf12, at least 3 peripheral proteins of the oxygen-evolving complex and a large number of cofactors. It forms dimeric complexes. It depends on heme c as a cofactor.

It localises to the plastid. Its subcellular location is the chloroplast thylakoid membrane. Its function is as follows. One of the extrinsic, lumenal subunits of photosystem II (PSII). PSII is a light-driven water plastoquinone oxidoreductase, using light energy to abstract electrons from H(2)O, generating a proton gradient subsequently used for ATP formation. The extrinsic proteins stabilize the structure of photosystem II oxygen-evolving complex (OEC), the ion environment of oxygen evolution and protect the OEC against heat-induced inactivation. The protein is Photosystem II extrinsic protein V of Trieres chinensis (Marine centric diatom).